We begin with the raw amino-acid sequence, 280 residues long: UDP-3-O-acyl-N-acetylglucosamine deacetylase (280 aa).

The Zn(2+) site is built by H77, H238, and D242. The active-site Proton donor is the H265.

It belongs to the LpxC family. The cofactor is Zn(2+).

The enzyme catalyses a UDP-3-O-[(3R)-3-hydroxyacyl]-N-acetyl-alpha-D-glucosamine + H2O = a UDP-3-O-[(3R)-3-hydroxyacyl]-alpha-D-glucosamine + acetate. It participates in glycolipid biosynthesis; lipid IV(A) biosynthesis; lipid IV(A) from (3R)-3-hydroxytetradecanoyl-[acyl-carrier-protein] and UDP-N-acetyl-alpha-D-glucosamine: step 2/6. Functionally, catalyzes the hydrolysis of UDP-3-O-myristoyl-N-acetylglucosamine to form UDP-3-O-myristoylglucosamine and acetate, the committed step in lipid A biosynthesis. This Trichormus variabilis (strain ATCC 29413 / PCC 7937) (Anabaena variabilis) protein is UDP-3-O-acyl-N-acetylglucosamine deacetylase.